Reading from the N-terminus, the 1434-residue chain is Protein patched homolog 1 (1434 aa).

Residues 1–13 are compositionally biased toward low complexity; that stretch reads MASAGNAAGALGR. Positions 1–34 are disordered; that stretch reads MASAGNAAGALGRQAGGGRRRRTGGPHRAAPDRD. The Cytoplasmic portion of the chain corresponds to 1–86; it reads MASAGNAAGA…GCYIQKNCGK (86 aa). Residues 87–107 traverse the membrane as a helical segment; sequence FLVVGLLIFGAFAVGLKAANL. Topologically, residues 108–422 are extracellular; that stretch reads ETNVEELWVE…LDDILKSFSD (315 aa). 4 N-linked (GlcNAc...) asparagine glycosylation sites follow: Asn127, Asn298, Asn335, and Asn400. A helical transmembrane segment spans residues 423–443; that stretch reads VSVIRVASGYLLMLAYACLTM. Residues 424 to 584 form the SSD domain; the sequence is SVIRVASGYL…LLIFPAILSM (161 aa). The Cytoplasmic segment spans residues 444–458; sequence LRWDCSKSQGAVGLA. The helical transmembrane segment at 459 to 479 threads the bilayer; the sequence is GVLLVALSVAAGLGLCSLIGI. The Extracellular segment spans residues 480-487; sequence SFNAATTQ. A helical transmembrane segment spans residues 488–508; it reads VLPFLALGVGVDDVFLLAHAF. Over 509 to 533 the chain is Cytoplasmic; the sequence is SETGQNKRIPFEDRTGECLKRTGAS. A helical transmembrane segment spans residues 534 to 554; that stretch reads VALTSISNVTAFFMAALIPIP. The Extracellular portion of the chain corresponds to 555 to 563; it reads ALRAFSLQA. Residues 564–584 traverse the membrane as a helical segment; the sequence is AVVVVFNFAMVLLIFPAILSM. At 585–734 the chain is on the cytoplasmic side; it reads DLYRREDRRL…HYAPFLLKPK (150 aa). Residues 735-755 form a helical membrane-spanning segment; the sequence is AKVVVILLFLGLLGVSLYGTT. Over 756–1013 the chain is Extracellular; it reads RVRDGLDLTD…WEQYISLRHW (258 aa). Residues Asn861 and Asn986 are each glycosylated (N-linked (GlcNAc...) asparagine). The chain crosses the membrane as a helical span at residues 1014-1034; that stretch reads LLLSISVVLACTFLVCAVFLL. Residues 1035–1039 lie on the Cytoplasmic side of the membrane; the sequence is NPWTA. A helical transmembrane segment spans residues 1040–1060; sequence GIIVMVLALMTVELFGMMGLI. Over 1061–1069 the chain is Extracellular; the sequence is GIKLSAVPV. The chain crosses the membrane as a helical span at residues 1070–1090; it reads VILIASVGIGVEFTVHVALAF. The Cytoplasmic segment spans residues 1091 to 1107; the sequence is LTAIGDKNHRAMLALEH. Residues 1108-1128 traverse the membrane as a helical segment; that stretch reads MFAPVLDGAVSTLLGVLMLAG. Residues 1129–1140 lie on the Extracellular side of the membrane; the sequence is SEFDFIVRYFFA. The chain crosses the membrane as a helical span at residues 1141–1161; sequence VLAILTVLGVLNGLVLLPVLL. Residues 1162–1434 lie on the Cytoplasmic side of the membrane; sequence SFFGPCPEVS…EERPWGSSSN (273 aa). 3 disordered regions span residues 1175–1219, 1257–1348, and 1368–1396; these read GLNR…TVSG, HPDS…SSVP, and HPPPGPGRNPRGGPCPGYESYPETDHGVF. At Thr1181 the chain carries Phosphothreonine. Position 1183 is a phosphoserine (Ser1183). Residues 1204–1213 are compositionally biased toward low complexity; the sequence is SDSSDSEYSS. Residues 1288 to 1297 show a composition bias toward basic and acidic residues; it reads PRRDPPREGL. Residues 1335–1348 show a composition bias toward polar residues; that stretch reads PRNPTSTAMGSSVP. Residue Lys1413 forms a Glycyl lysine isopeptide (Lys-Gly) (interchain with G-Cter in ubiquitin) linkage.

It belongs to the patched family. As to quaternary structure, interacts with SNX17. Interacts with IHH. Interacts with G-protein coupled receptor GPR37L1. Post-translationally, glycosylation is necessary for SHH binding. In the absence of Hh ligands, ubiquitination by ITCH at Lys-1413 promotes endocytosis and both proteasomal and lysosomal degradation. Detected in cerebellar Bergmann glia cells (at protein level). In the developing embryo, first detected within the ventral neural tube and later in the somites and limb buds. Expression in the limb buds is restricted to the posterior ectoderm surrounding the zone of polarizing activity. In the adult, expression is seen in brain, lung, liver, kidney and ocular tissues; lower levels in heart, skeletal muscle, and testis.

The protein resides in the cell membrane. In terms of biological role, acts as a receptor for sonic hedgehog (SHH), indian hedgehog (IHH) and desert hedgehog (DHH). Associates with the smoothened protein (SMO) to transduce the hedgehog's proteins signal. Seems to have a tumor suppressor function, as inactivation of this protein is probably a necessary, if not sufficient step for tumorigenesis. The protein is Protein patched homolog 1 (Ptch1) of Mus musculus (Mouse).